A 376-amino-acid chain; its full sequence is DNA replication and repair protein RecF (376 aa).

An ATP-binding site is contributed by 30-37 (GHNGVGKT).

The protein belongs to the RecF family.

The protein localises to the cytoplasm. Its function is as follows. The RecF protein is involved in DNA metabolism; it is required for DNA replication and normal SOS inducibility. RecF binds preferentially to single-stranded, linear DNA. It also seems to bind ATP. This is DNA replication and repair protein RecF from Salinispora arenicola (strain CNS-205).